We begin with the raw amino-acid sequence, 472 residues long: Argininosuccinate lyase (472 aa).

It belongs to the lyase 1 family. Argininosuccinate lyase subfamily.

Its subcellular location is the cytoplasm. The enzyme catalyses 2-(N(omega)-L-arginino)succinate = fumarate + L-arginine. It participates in amino-acid biosynthesis; L-arginine biosynthesis; L-arginine from L-ornithine and carbamoyl phosphate: step 3/3. This Synechococcus sp. (strain CC9311) protein is Argininosuccinate lyase.